Consider the following 439-residue polypeptide: Xylose isomerase (439 aa).

Catalysis depends on residues His101 and Asp104. Mg(2+)-binding residues include Glu232, Glu268, His271, Asp296, Asp307, Asp309, and Asp339.

Belongs to the xylose isomerase family. As to quaternary structure, homotetramer. It depends on Mg(2+) as a cofactor.

The protein resides in the cytoplasm. It carries out the reaction alpha-D-xylose = alpha-D-xylulofuranose. In Pectobacterium atrosepticum (strain SCRI 1043 / ATCC BAA-672) (Erwinia carotovora subsp. atroseptica), this protein is Xylose isomerase.